A 360-amino-acid chain; its full sequence is MEQLKVVLGKRSYPINIGSSIIQEDNIFWPLNPGNQAMLITNKTLANLFKDKVFFHLRKSGIKIDQVILSDGEQFKTLNEMEVIISALLEKKHSRDTTLIALGGGVIGDLTGFSASIYQRGVRFIQIPTTLLSQVDASVGGKTGVNHLLGKNMVGSFWQPSSVIIDINFLKTLPYNELVSGMAEVIKYAVIFDANFFEWLEENIENLLLLNDELMSYCIKKCCELKAQIIALDERENNFRALLNFGHTYGHAIEAHAGYGSWLHGEAISVGMVMASRTSELIGCLKKTDYKRILSLLKKAGLPVKGPKNMSAASYLPYMMRDKKVISGEMRLVLPISIGKAKIYSGIDKNIILSAIKDSQ.

NAD(+)-binding positions include 71-76 (DGEQFK), 105-109 (GVIGD), 129-130 (TT), lysine 142, lysine 151, and 169-172 (FLKT). The Zn(2+) site is built by glutamate 184, histidine 247, and histidine 264.

This sequence belongs to the sugar phosphate cyclases superfamily. Dehydroquinate synthase family. Requires NAD(+) as cofactor. The cofactor is Co(2+). Zn(2+) is required as a cofactor.

Its subcellular location is the cytoplasm. The enzyme catalyses 7-phospho-2-dehydro-3-deoxy-D-arabino-heptonate = 3-dehydroquinate + phosphate. Its pathway is metabolic intermediate biosynthesis; chorismate biosynthesis; chorismate from D-erythrose 4-phosphate and phosphoenolpyruvate: step 2/7. Catalyzes the conversion of 3-deoxy-D-arabino-heptulosonate 7-phosphate (DAHP) to dehydroquinate (DHQ). The chain is 3-dehydroquinate synthase from Buchnera aphidicola subsp. Schizaphis graminum (strain Sg).